A 231-amino-acid chain; its full sequence is Urease accessory protein UreF (231 aa).

Belongs to the UreF family. UreD, UreF and UreG form a complex that acts as a GTP-hydrolysis-dependent molecular chaperone, activating the urease apoprotein by helping to assemble the nickel containing metallocenter of UreC. The UreE protein probably delivers the nickel.

The protein resides in the cytoplasm. In terms of biological role, required for maturation of urease via the functional incorporation of the urease nickel metallocenter. The sequence is that of Urease accessory protein UreF from Magnetococcus marinus (strain ATCC BAA-1437 / JCM 17883 / MC-1).